The sequence spans 425 residues: Dihydroorotase (425 aa).

Residues H61 and H63 each contribute to the Zn(2+) site. Substrate-binding positions include 63 to 65 (HLR) and N95. Zn(2+) contacts are provided by D153, H180, and H233. A substrate-binding site is contributed by N279. Zn(2+) is bound at residue D306. Residue D306 is part of the active site. H310 contacts substrate.

This sequence belongs to the metallo-dependent hydrolases superfamily. DHOase family. Class I DHOase subfamily. Requires Zn(2+) as cofactor.

The catalysed reaction is (S)-dihydroorotate + H2O = N-carbamoyl-L-aspartate + H(+). Its pathway is pyrimidine metabolism; UMP biosynthesis via de novo pathway; (S)-dihydroorotate from bicarbonate: step 3/3. Its function is as follows. Catalyzes the reversible cyclization of carbamoyl aspartate to dihydroorotate. The polypeptide is Dihydroorotase (Geobacter sp. (strain M21)).